The chain runs to 315 residues: Phosphatidylglycerol--prolipoprotein diacylglyceryl transferase (315 aa).

Transmembrane regions (helical) follow at residues 19 to 39 (FTIH…VWIL) and 93 to 113 (VWEG…VAFL). Arg-141 serves as a coordination point for a 1,2-diacyl-sn-glycero-3-phospho-(1'-sn-glycerol). 2 consecutive transmembrane segments (helical) span residues 188-208 (LFHP…ALII) and 256-276 (MWTA…LYQY).

It belongs to the Lgt family.

It localises to the cell membrane. The catalysed reaction is L-cysteinyl-[prolipoprotein] + a 1,2-diacyl-sn-glycero-3-phospho-(1'-sn-glycerol) = an S-1,2-diacyl-sn-glyceryl-L-cysteinyl-[prolipoprotein] + sn-glycerol 1-phosphate + H(+). It functions in the pathway protein modification; lipoprotein biosynthesis (diacylglyceryl transfer). Its function is as follows. Catalyzes the transfer of the diacylglyceryl group from phosphatidylglycerol to the sulfhydryl group of the N-terminal cysteine of a prolipoprotein, the first step in the formation of mature lipoproteins. This Bifidobacterium longum subsp. infantis (strain ATCC 15697 / DSM 20088 / JCM 1222 / NCTC 11817 / S12) protein is Phosphatidylglycerol--prolipoprotein diacylglyceryl transferase.